We begin with the raw amino-acid sequence, 163 residues long: Transcriptional repressor NrdR (163 aa).

Residues 3–34 (CPFCAYADTRVVDSRLADDGGSVRRRRECPQC) fold into a zinc finger. The region spanning 49 to 139 (PVVVKTDGRR…VYRRFEDVDA (91 aa)) is the ATP-cone domain.

It belongs to the NrdR family. It depends on Zn(2+) as a cofactor.

In terms of biological role, negatively regulates transcription of bacterial ribonucleotide reductase nrd genes and operons by binding to NrdR-boxes. This is Transcriptional repressor NrdR from Acidithiobacillus ferrooxidans (strain ATCC 23270 / DSM 14882 / CIP 104768 / NCIMB 8455) (Ferrobacillus ferrooxidans (strain ATCC 23270)).